The chain runs to 129 residues: Small ribosomal subunit protein uS11 (129 aa).

The protein belongs to the universal ribosomal protein uS11 family. Part of the 30S ribosomal subunit. Interacts with proteins S7 and S18. Binds to IF-3.

Located on the platform of the 30S subunit, it bridges several disparate RNA helices of the 16S rRNA. Forms part of the Shine-Dalgarno cleft in the 70S ribosome. The chain is Small ribosomal subunit protein uS11 from Staphylococcus epidermidis (strain ATCC 12228 / FDA PCI 1200).